A 373-amino-acid chain; its full sequence is Cytoplasmic tRNA 2-thiolation protein 1 (373 aa).

It belongs to the TtcA family. CTU1/NCS6/ATPBD3 subfamily.

It is found in the cytoplasm. The protein operates within tRNA modification; 5-methoxycarbonylmethyl-2-thiouridine-tRNA biosynthesis. In terms of biological role, plays a central role in 2-thiolation of mcm(5)S(2)U at tRNA wobble positions of tRNA(Lys), tRNA(Glu) and tRNA(Gln). Directly binds tRNAs and probably acts by catalyzing adenylation of tRNAs, an intermediate required for 2-thiolation. It is unclear whether it acts as a sulfurtransferase that transfers sulfur from thiocarboxylated URM1 onto the uridine of tRNAs at wobble position. Prior mcm(5) tRNA modification by the elongator complex is required for 2-thiolation. May also be involved in protein urmylation. The chain is Cytoplasmic tRNA 2-thiolation protein 1 from Eremothecium gossypii (strain ATCC 10895 / CBS 109.51 / FGSC 9923 / NRRL Y-1056) (Yeast).